Reading from the N-terminus, the 650-residue chain is Rab proteins geranylgeranyltransferase component A 1 (650 aa).

Disordered stretches follow at residues 156–208 (IPAE…ETPK) and 603–650 (PAPP…EPSE). Basic and acidic residues predominate over residues 177–190 (ATGKKENSDAKSST). Residues 616 to 634 (DSSQQEVPESSVTPETNSE) show a composition bias toward polar residues.

This sequence belongs to the Rab GDI family. As to quaternary structure, monomer. Heterotrimer composed of RABGGTA, RABGGTB and CHM; within this trimer, RABGGTA and RABGGTB form the catalytic component B, while CHM (component A) mediates Rab protein binding. Can associate with the Rab GGTase dimer (RGGT or component B) prior to Rab protein binding; the association is stabilized by geranylgeranyl pyrophosphate (GGpp). The CHM:RGGT:Rab complex is destabilized by GGpp. Interacts with RAB1A, RAB1B, RAB7A and RAB27A and mediates their prenylation. Interacts with RAB5A. Interacts with the non-phosphorylated forms of RAB3A, RAB3B, RAB3C, RAB3D, RAB5B, RAB5C RAB8A, RAB8B, RAB10, RAB12, RAB35, and RAB43. As to expression, most abundant in the heart, brain, and spleen. Lower levels seen in the lung, liver, muscle and kidney. Extremely low levels seen in the testis.

The protein resides in the cytoplasm. Its subcellular location is the cytosol. Functionally, substrate-binding subunit of the Rab geranylgeranyltransferase (GGTase) complex. Binds unprenylated Rab proteins and presents the substrate peptide to the catalytic component B composed of RABGGTA and RABGGTB, and remains bound to it after the geranylgeranyl transfer reaction. The component A is thought to be regenerated by transferring its prenylated Rab back to the donor membrane. Besides, a pre-formed complex consisting of CHM and the Rab GGTase dimer (RGGT or component B) can bind to and prenylate Rab proteins; this alternative pathway is proposed to be the predominant pathway for Rab protein geranylgeranylation. The chain is Rab proteins geranylgeranyltransferase component A 1 (Chm) from Rattus norvegicus (Rat).